Here is a 156-residue protein sequence, read N- to C-terminus: Transcriptional regulator MraZ (156 aa).

2 SpoVT-AbrB domains span residues 7 to 54 and 84 to 127; these read NIEV…PESV and VEVV…AKER.

Belongs to the MraZ family. In terms of assembly, forms oligomers.

Its subcellular location is the cytoplasm. It is found in the nucleoid. This Bacteroides thetaiotaomicron (strain ATCC 29148 / DSM 2079 / JCM 5827 / CCUG 10774 / NCTC 10582 / VPI-5482 / E50) protein is Transcriptional regulator MraZ.